Here is a 926-residue protein sequence, read N- to C-terminus: Alpha-aminoadipic semialdehyde synthase, mitochondrial (926 aa).

The N-terminal 27 residues, 1-27 (MLRVSRTKLGRLSPSLSRGLHHKAVMA), are a transit peptide targeting the mitochondrion. The segment at 28-455 (LRREDVNAWE…DAVIASNGML (428 aa)) is lysine-ketoglutarate reductase. Lysine 48 and lysine 56 each carry N6-acetyllysine. Lysine 93 is subject to N6-acetyllysine; alternate. Lysine 93 is subject to N6-succinyllysine; alternate. Lysine 128 bears the N6-acetyllysine mark. N6-acetyllysine; alternate is present on lysine 138. Lysine 138 is modified (N6-succinyllysine; alternate). At lysine 274 the chain carries N6-succinyllysine. An N6-acetyllysine; alternate modification is found at lysine 286. Lysine 286 bears the N6-succinyllysine; alternate mark. An N6-succinyllysine modification is found at lysine 333. Lysine 458 bears the N6-acetyllysine; alternate mark. N6-succinyllysine; alternate is present on lysine 458. A saccharopine dehydrogenase region spans residues 477–926 (MGTKKKVLVL…MYTTQSTIKL (450 aa)). The NAD(+) site is built by serine 488, aspartate 512, and glutamine 516. An N6-acetyllysine; alternate mark is found at lysine 523 and lysine 535. Residues lysine 523 and lysine 535 each carry the N6-succinyllysine; alternate modification. NAD(+)-binding residues include leucine 554, alanine 576, and serine 577. 577-578 (SY) lines the L-saccharopine pocket. Lysine 584 carries the N6-acetyllysine; alternate modification. Lysine 584 is modified (N6-succinyllysine; alternate). Positions 603, 604, and 605 each coordinate NAD(+). Position 604 (aspartate 604) interacts with L-saccharopine. Arginine 703 is an L-saccharopine binding site. N6-acetyllysine is present on lysine 707. 724 to 726 (TLR) contributes to the L-saccharopine binding site. Lysine 732 is subject to N6-succinyllysine. Position 739 is an N6-acetyllysine (lysine 739). Position 761 is an N6-acetyllysine; alternate (lysine 761). Lysine 761 carries the N6-succinyllysine; alternate modification. Lysine 780 is subject to N6-acetyllysine.

It in the N-terminal section; belongs to the AlaDH/PNT family. The protein in the C-terminal section; belongs to the saccharopine dehydrogenase family. Homotetramer.

Its subcellular location is the mitochondrion. It carries out the reaction L-saccharopine + NADP(+) + H2O = L-lysine + 2-oxoglutarate + NADPH + H(+). The catalysed reaction is L-saccharopine + NAD(+) + H2O = (S)-2-amino-6-oxohexanoate + L-glutamate + NADH + H(+). It functions in the pathway amino-acid degradation; L-lysine degradation via saccharopine pathway; glutaryl-CoA from L-lysine: step 1/6. Its pathway is amino-acid degradation; L-lysine degradation via saccharopine pathway; glutaryl-CoA from L-lysine: step 2/6. Functionally, bifunctional enzyme that catalyzes the first two steps in lysine degradation. The sequence is that of Alpha-aminoadipic semialdehyde synthase, mitochondrial from Bos taurus (Bovine).